A 964-amino-acid polypeptide reads, in one-letter code: Fanconi-associated nuclease 1 homolog (964 aa).

Residues 31–56 (SRSLQDDAADAEREAAAGGSSSGGGD) form a disordered region. Residues 63–92 (WVACPVCGESIRGTDYCVNTHLDICLTRGT) form a UBZ4-type zinc finger. 4 residues coordinate Zn(2+): Cys-66, Cys-69, His-83, and Cys-87. Glu-786, Asp-907, Glu-926, and Val-927 together coordinate Mn(2+). The VRR-NUC domain occupies 844-958 (GIAEEILISS…GFDVEVCKVS (115 aa)).

It belongs to the FAN1 family. It depends on Mn(2+) as a cofactor. Requires Mg(2+) as cofactor.

The enzyme catalyses Hydrolytically removes 5'-nucleotides successively from the 3'-hydroxy termini of 3'-hydroxy-terminated oligonucleotides.. In terms of biological role, nuclease required for the repair of DNA interstrand cross-links (ICL). Acts as a 5'-3' exonuclease that anchors at a cut end of DNA and cleaves DNA successively at every third nucleotide, allowing to excise an ICL from one strand through flanking incisions. The protein is Fanconi-associated nuclease 1 homolog of Oryza sativa subsp. japonica (Rice).